The following is an 81-amino-acid chain: Trefoil factor 3 (81 aa).

A signal peptide spans 1 to 23 (MEARTFWLLVVAVLALGSSSSTG). The region spanning 31-74 (NQCAVPAKDRVDCGYPEVTPEQCNNRGCCFDSSIHGVPWCFKPL) is the P-type domain. 3 cysteine pairs are disulfide-bonded: Cys33–Cys59, Cys43–Cys58, and Cys53–Cys70.

Monomer. Homodimer; disulfide-linked.

The protein localises to the secreted. It localises to the extracellular space. It is found in the extracellular matrix. Its subcellular location is the cytoplasm. Involved in the maintenance and repair of the intestinal mucosa. Promotes the mobility of epithelial cells in healing processes (motogen). The chain is Trefoil factor 3 (TFF3) from Bos taurus (Bovine).